The primary structure comprises 356 residues: Heat-inducible transcription repressor HrcA (356 aa).

This sequence belongs to the HrcA family.

Its function is as follows. Negative regulator of class I heat shock genes (grpE-dnaK-dnaJ and groELS operons). Prevents heat-shock induction of these operons. This chain is Heat-inducible transcription repressor HrcA, found in Bartonella quintana (strain Toulouse) (Rochalimaea quintana).